The chain runs to 411 residues: DSEFVELKIRGKIFKLPILKASIGEDVIDISRVSSEADCFTYDPGFMSTASCRSTITYIDGDKGILRYRGYDIKDLADKSDFLEVAYLLIYGELPSSEQYNNFTKKVAVHSLVNERLHYLFQTFCSSSHPMAIMLAAVGSLSAFYPDLLNFKEADYELTAIRMIAKIPTMAAMSYKYSIGQPFIYPDNSLDFTENFLHMMFATPCMKYEVNPVIKNALNKIFILHADHEQNASTSTVRIAGSSGANPFACISTGIASLWGPAHGGANEAVINMLKEIGSSENIPKYIAKAKDKDDPFRLMGFGHRVYKNYDPRAAVLKETCNEVLKELGQLENNPLLQIAIELEAIALKDEYFIERKLYPNVDFYSGIIYKAMGIPSQMFTVLFAIARTVGWMAQWKEMHEDPEQKISRPR.

Active-site residues include His-304 and Asp-363.

It belongs to the citrate synthase family.

The catalysed reaction is oxaloacetate + acetyl-CoA + H2O = citrate + CoA + H(+). Its pathway is carbohydrate metabolism; tricarboxylic acid cycle; isocitrate from oxaloacetate: step 1/2. The protein is Citrate synthase (gltA) of Rickettsia canadensis.